The primary structure comprises 200 residues: Holliday junction resolvase RecU (200 aa).

The tract at residues 1–25 (MTIRYPNGKRYNQASQPQKTPIKTH) is disordered. A compositionally biased stretch (polar residues) spans 10 to 25 (RYNQASQPQKTPIKTH). 4 residues coordinate Mg(2+): threonine 85, aspartate 87, glutamate 100, and glutamine 119.

It belongs to the RecU family. Mg(2+) serves as cofactor.

It is found in the cytoplasm. The catalysed reaction is Endonucleolytic cleavage at a junction such as a reciprocal single-stranded crossover between two homologous DNA duplexes (Holliday junction).. Endonuclease that resolves Holliday junction intermediates in genetic recombination. Cleaves mobile four-strand junctions by introducing symmetrical nicks in paired strands. Promotes annealing of linear ssDNA with homologous dsDNA. Required for DNA repair, homologous recombination and chromosome segregation. The sequence is that of Holliday junction resolvase RecU from Bacillus cereus (strain B4264).